The primary structure comprises 93 residues: Cell division protein CrgA (93 aa).

The next 2 helical transmembrane spans lie at 31–51 (VWFV…LMVF) and 70–90 (LGPW…LLTM).

The protein belongs to the CrgA family.

The protein resides in the cell membrane. In terms of biological role, involved in cell division. The chain is Cell division protein CrgA from Mycobacterium bovis (strain ATCC BAA-935 / AF2122/97).